Reading from the N-terminus, the 155-residue chain is MSIIDNRKATHDYFIEDRYEAGMVLEGWEVKAIRDGRVQLKESYVIVRDGEIYLLGMHVSPLPTASTHIRPDATRTRKLLLKAEEIRKLIGKVEQRGYTLVPLNLHYKNGRIKLDFALGRGKKLYDKRDTAREKDWQREKERVLKHDTRVNQRDS.

Belongs to the SmpB family.

The protein localises to the cytoplasm. Required for rescue of stalled ribosomes mediated by trans-translation. Binds to transfer-messenger RNA (tmRNA), required for stable association of tmRNA with ribosomes. tmRNA and SmpB together mimic tRNA shape, replacing the anticodon stem-loop with SmpB. tmRNA is encoded by the ssrA gene; the 2 termini fold to resemble tRNA(Ala) and it encodes a 'tag peptide', a short internal open reading frame. During trans-translation Ala-aminoacylated tmRNA acts like a tRNA, entering the A-site of stalled ribosomes, displacing the stalled mRNA. The ribosome then switches to translate the ORF on the tmRNA; the nascent peptide is terminated with the 'tag peptide' encoded by the tmRNA and targeted for degradation. The ribosome is freed to recommence translation, which seems to be the essential function of trans-translation. In Bordetella bronchiseptica (strain ATCC BAA-588 / NCTC 13252 / RB50) (Alcaligenes bronchisepticus), this protein is SsrA-binding protein.